Consider the following 545-residue polypeptide: Chaperonin GroEL (545 aa).

ATP contacts are provided by residues threonine 29 to proline 32, lysine 50, aspartate 86 to threonine 90, glycine 413, and aspartate 495.

Belongs to the chaperonin (HSP60) family. In terms of assembly, forms a cylinder of 14 subunits composed of two heptameric rings stacked back-to-back. Interacts with the co-chaperonin GroES.

It is found in the cytoplasm. The catalysed reaction is ATP + H2O + a folded polypeptide = ADP + phosphate + an unfolded polypeptide.. In terms of biological role, together with its co-chaperonin GroES, plays an essential role in assisting protein folding. The GroEL-GroES system forms a nano-cage that allows encapsulation of the non-native substrate proteins and provides a physical environment optimized to promote and accelerate protein folding. This Borrelia garinii subsp. bavariensis (strain ATCC BAA-2496 / DSM 23469 / PBi) (Borreliella bavariensis) protein is Chaperonin GroEL.